We begin with the raw amino-acid sequence, 55 residues long: uncharacterized protein (55 aa).

The next 2 helical transmembrane spans lie at 5–25 (LISI…MMHM) and 26–46 (LPLY…LYRL).

Its subcellular location is the cell membrane. This is an uncharacterized protein from Bacillus subtilis (strain 168).